The sequence spans 336 residues: Glucokinase (336 aa).

Position 12–17 (12–17 (ADIGGT)) interacts with ATP.

This sequence belongs to the bacterial glucokinase family.

The protein localises to the cytoplasm. The catalysed reaction is D-glucose + ATP = D-glucose 6-phosphate + ADP + H(+). In Helicobacter pylori (strain J99 / ATCC 700824) (Campylobacter pylori J99), this protein is Glucokinase.